A 480-amino-acid chain; its full sequence is Aromatic-L-amino-acid decarboxylase (480 aa).

Methionine 1 is subject to N-acetylmethionine. 2 consecutive repeat copies span residues 58-115 (RDIE…TELE) and 118-178 (MMDW…TQAA). Residues 58–178 (RDIEKIIMPG…AASPELTQAA (121 aa)) are 2 X approximate tandem repeats. Threonine 82 serves as a coordination point for substrate. Positions 148 and 149 each coordinate pyridoxal 5'-phosphate. A substrate-binding site is contributed by histidine 192. Positions 246 and 300 each coordinate pyridoxal 5'-phosphate. Lysine 303 is modified (N6-(pyridoxal phosphate)lysine).

Belongs to the group II decarboxylase family. In terms of assembly, homodimer. Pyridoxal 5'-phosphate serves as cofactor.

The enzyme catalyses L-dopa + H(+) = dopamine + CO2. It catalyses the reaction 5-hydroxy-L-tryptophan + H(+) = serotonin + CO2. It participates in catecholamine biosynthesis; dopamine biosynthesis; dopamine from L-tyrosine: step 2/2. Catalyzes the decarboxylation of L-3,4-dihydroxyphenylalanine (DOPA) to dopamine and L-5-hydroxytryptophan to serotonin. The sequence is that of Aromatic-L-amino-acid decarboxylase from Rattus norvegicus (Rat).